Consider the following 921-residue polypeptide: Glutamate receptor 3.7 (921 aa).

Positions M1–C25 are cleaved as a signal peptide. Over Q26–R580 the chain is Extracellular. 7 N-linked (GlcNAc...) asparagine glycosylation sites follow: N214, N300, N330, N369, N396, N478, and N568. The chain crosses the membrane as a helical span at residues L581–H601. Over R602–R608 the chain is Cytoplasmic. A helical transmembrane segment spans residues G609–R629. At N630–R640 the chain is on the cytoplasmic side. Residues L641–L661 traverse the membrane as a helical segment. Over T662 to S822 the chain is Extracellular. Residues F823–L843 form a helical membrane-spanning segment. The Cytoplasmic segment spans residues R844–N921. Residues F896–N921 are disordered.

This sequence belongs to the glutamate-gated ion channel (TC 1.A.10.1) family. As to quaternary structure, may form heteromers. Expressed predominantly in leaves and siliques. Also detected in roots.

The protein localises to the membrane. Its function is as follows. Glutamate-gated receptor that probably acts as a non-selective cation channel. May be involved in light-signal transduction and calcium homeostasis via the regulation of calcium influx into cells. This is Glutamate receptor 3.7 (GLR3.7) from Arabidopsis thaliana (Mouse-ear cress).